We begin with the raw amino-acid sequence, 86 residues long: ICP47 protein (86 aa).

The interval 2-35 is active domain; sequence SWALKTTDMFLDSSRCTHRTYGDVCAEIHKRERE. The interval 33–86 is disordered; sequence EREDREAARTAVTDPELPLLCPPDVRSDPASRNPTQQTRGCARSNERQDRVLAP. Positions 62 to 71 are enriched in polar residues; it reads ASRNPTQQTR. Residues 76 to 86 are compositionally biased toward basic and acidic residues; the sequence is SNERQDRVLAP.

It belongs to the herpesviridae US12 family. Interacts with host TAP1 and TAP2; these interactions inhibit the loading of peptides onto MHC class I molecules.

The protein localises to the host cytoplasm. It is found in the host nucleus. In terms of biological role, plays a role in the inhibition of host immune response. Binds specifically to transporters associated with antigen processing (TAP), thereby blocking peptide-binding and translocation by TAP as well as subsequent loading of peptides onto MHC class I molecules. Empty MHC I molecules are retained in the endoplasmic reticulum and ultimately directed to proteasomal degradation. In consequence, infected cells are masked for immune recognition by cytotoxic T-lymphocytes. This is ICP47 protein (US12) from Human herpesvirus 2 (strain HG52) (HHV-2).